A 330-amino-acid chain; its full sequence is Cathepsin K (330 aa).

An N-terminal signal peptide occupies residues 1 to 16 (MWGLEVLLLLPMASFA). The propeptide at 17 to 115 (LYPEEILDTQ…TLYIPDWESR (99 aa)) is activation peptide. N-linked (GlcNAc...) asparagine glycosylation occurs at asparagine 104. Disulfide bonds link cysteine 137-cysteine 178, cysteine 171-cysteine 211, and cysteine 270-cysteine 319. Cysteine 140 is a catalytic residue. Residues histidine 277 and asparagine 297 contribute to the active site.

This sequence belongs to the peptidase C1 family.

The protein localises to the lysosome. It localises to the secreted. It is found in the apical cell membrane. The enzyme catalyses Broad proteolytic activity. With small-molecule substrates and inhibitors, the major determinant of specificity is P2, which is preferably Leu, Met &gt; Phe, and not Arg.. In terms of biological role, thiol protease involved in osteoclastic bone resorption and may participate partially in the disorder of bone remodeling. Displays potent endoprotease activity against fibrinogen at acid pH. May play an important role in extracellular matrix degradation. Involved in the release of thyroid hormone thyroxine (T4) by limited proteolysis of TG/thyroglobulin in the thyroid follicle lumen. The polypeptide is Cathepsin K (CTSK) (Canis lupus familiaris (Dog)).